Reading from the N-terminus, the 81-residue chain is Defensin-like protein 153 (81 aa).

The first 26 residues, 1 to 26 (MKNVSQVSVAVLLIFSILVLGIGVQG), serve as a signal peptide directing secretion. Cystine bridges form between Cys30–Cys81, Cys41–Cys60, Cys46–Cys75, and Cys50–Cys77.

Belongs to the DEFL family.

The protein localises to the secreted. This is Defensin-like protein 153 (LCR31) from Arabidopsis thaliana (Mouse-ear cress).